The primary structure comprises 263 residues: MPEGPEIRRAADNLEAAIKGKPLTDVWFAFPQLKTYQSQLIGQHVTHVETRGKALLTHFSNDLTLYSHNQLYGVWRVVDTGEESQTTRVLRVKLQTADKTILLYSASDIEMLTPEQLTTHPFLQRVGPDVLDPNLTPEVVKERLLSPRFRNRQFAGLLLDQAFLAGLGNYLRVEILWQVGLTGNHKAKDLNAAQLDALAHALLDIPRFSYATRGQVDENKHHGALFRFKVFHRDGELCERCGGIIEKTTLSSRPFYWCPGCQH.

The active-site Schiff-base intermediate with DNA is P2. Catalysis depends on E3, which acts as the Proton donor. The active-site Proton donor; for beta-elimination activity is K53. Residues Q70, R125, and N169 each contribute to the DNA site. An FPG-type zinc finger spans residues 229 to 263; the sequence is KVFHRDGELCERCGGIIEKTTLSSRPFYWCPGCQH. Residue R253 is the Proton donor; for delta-elimination activity of the active site.

Belongs to the FPG family. Requires Zn(2+) as cofactor.

It carries out the reaction 2'-deoxyribonucleotide-(2'-deoxyribose 5'-phosphate)-2'-deoxyribonucleotide-DNA = a 3'-end 2'-deoxyribonucleotide-(2,3-dehydro-2,3-deoxyribose 5'-phosphate)-DNA + a 5'-end 5'-phospho-2'-deoxyribonucleoside-DNA + H(+). Its function is as follows. Involved in base excision repair of DNA damaged by oxidation or by mutagenic agents. Acts as a DNA glycosylase that recognizes and removes damaged bases. Has a preference for oxidized pyrimidines, such as thymine glycol, 5,6-dihydrouracil and 5,6-dihydrothymine. Has AP (apurinic/apyrimidinic) lyase activity and introduces nicks in the DNA strand. Cleaves the DNA backbone by beta-delta elimination to generate a single-strand break at the site of the removed base with both 3'- and 5'-phosphates. This Escherichia coli O157:H7 protein is Endonuclease 8.